The primary structure comprises 655 residues: Probable potassium transport system protein Kup (655 aa).

The next 12 helical transmembrane spans lie at 19–39 (GLLI…LYVM), 42–62 (IAGG…CVFW), 102–122 (VWPA…TPPI), 132–152 (LIFN…VMLF), 161–181 (IVGK…ATLG), 214–234 (SGFW…ALYS), 246–266 (ISWI…GAWI), 282–302 (IMPE…AIIA), 338–358 (LFIP…VLWF), 370–390 (LAIN…LLII), 395–415 (FIWV…FLVA), and 420–440 (FFHG…IMII).

It belongs to the HAK/KUP transporter (TC 2.A.72) family.

Its subcellular location is the cell inner membrane. It catalyses the reaction K(+)(in) + H(+)(in) = K(+)(out) + H(+)(out). Transport of potassium into the cell. Likely operates as a K(+):H(+) symporter. In Cytophaga hutchinsonii (strain ATCC 33406 / DSM 1761 / CIP 103989 / NBRC 15051 / NCIMB 9469 / D465), this protein is Probable potassium transport system protein Kup.